The primary structure comprises 552 residues: Glucose-6-phosphate isomerase (552 aa).

Glu-357 (proton donor) is an active-site residue. Catalysis depends on residues His-388 and Lys-516. A disordered region spans residues 525 to 552 (ELASTKPPKHDSSTNALIERYRTRGCRS).

It belongs to the GPI family.

The protein localises to the cytoplasm. It catalyses the reaction alpha-D-glucose 6-phosphate = beta-D-fructose 6-phosphate. Its pathway is carbohydrate biosynthesis; gluconeogenesis. It functions in the pathway carbohydrate degradation; glycolysis; D-glyceraldehyde 3-phosphate and glycerone phosphate from D-glucose: step 2/4. Catalyzes the reversible isomerization of glucose-6-phosphate to fructose-6-phosphate. The chain is Glucose-6-phosphate isomerase from Laribacter hongkongensis (strain HLHK9).